We begin with the raw amino-acid sequence, 143 residues long: Deoxyuridine 5'-triphosphate nucleotidohydrolase (143 aa).

Belongs to the dUTPase family. Mg(2+) is required as a cofactor.

It carries out the reaction dUTP + H2O = dUMP + diphosphate + H(+). Its function is as follows. This enzyme is involved in nucleotide metabolism: it produces dUMP, the immediate precursor of thymidine nucleotides and it decreases the intracellular concentration of dUTP so that uracil cannot be incorporated into DNA. This chain is Deoxyuridine 5'-triphosphate nucleotidohydrolase (DUT), found in Yaba monkey tumor virus (strain VR587) (YMTV).